The following is a 565-amino-acid chain: Oxygen-dependent choline dehydrogenase (565 aa).

FAD is bound at residue 6–35 (DYIIVGAGSAGNTLATRLTEDASVSVLLLE). A disordered region spans residues 182–203 (QQEGFGPMDRSVTKKGRRSSTA). The Proton acceptor role is filled by histidine 475.

Belongs to the GMC oxidoreductase family. FAD serves as cofactor.

It catalyses the reaction choline + A = betaine aldehyde + AH2. The catalysed reaction is betaine aldehyde + NAD(+) + H2O = glycine betaine + NADH + 2 H(+). The protein operates within amine and polyamine biosynthesis; betaine biosynthesis via choline pathway; betaine aldehyde from choline (cytochrome c reductase route): step 1/1. Functionally, involved in the biosynthesis of the osmoprotectant glycine betaine. Catalyzes the oxidation of choline to betaine aldehyde and betaine aldehyde to glycine betaine at the same rate. The chain is Oxygen-dependent choline dehydrogenase from Pseudomonas entomophila (strain L48).